The primary structure comprises 418 residues: D-amino acid dehydrogenase (418 aa).

3 to 17 is an FAD binding site; that stretch reads VLVLGAGVVGTTSAW.

Belongs to the DadA oxidoreductase family. FAD serves as cofactor.

The catalysed reaction is a D-alpha-amino acid + A + H2O = a 2-oxocarboxylate + AH2 + NH4(+). It participates in amino-acid degradation; D-alanine degradation; NH(3) and pyruvate from D-alanine: step 1/1. In terms of biological role, oxidative deamination of D-amino acids. The protein is D-amino acid dehydrogenase of Dechloromonas aromatica (strain RCB).